The following is a 1369-amino-acid chain: MTSSSPKTRKSSTKSKAKRGSKSKKAAEIKAVQRLSKTPPPFRNKVVDKKVLKNLVAWAFKHHGTAATAAMADNLKDLGFRYATQAAVSISVDDLKVPEAKQDLLGQAEELITATEECYRLGEITEVERHTKVIDTWTETNERLVDAVKKNFNQNDPLNSVWMMANSGARGNMSQVRQLVGMRGLMANPQGEIIDLPIRTNFREGLTVTEYVISSYGARKGLVDTALRTADSGYLTRRLVDVAQDVIVREEDCGTTRSILISAEDGKFGNRLVGRLTSEQVVNADQEVLAERDTPIDPQLSKKFEQSNLQGVRVRSPLTCEATRSVCRKCYGWALAHNQLVDLGEAVGIVAAQSIGEPGTQLTMRTFHTGGVSTAETGVVRSTLSGKVEFGSKARVRGYRTPHGVEAQQAEVDFNLSIVPTSGSKPQKIDIPIGSLLFVDNGQNIDIDVTVAQIASGTVQKSVEKATKDVICDLAGQVRYETIIQPREVTDRQGNITLKAQRLGRLWVLAGDVYNLPPNALPVVSGNVSVKEGQVLAEASQASEFGGEVRLRDSIGDSREVQIVTTSMILNDFKLLEESTHSGEIWHLEAQDNTRYRLNTIPGSKIGNNEVIAELSDDRFKTETGGLIKYAPGLTIKKARSAKNGYEVSKGGTLLWIPQETHEINKDISLLMIKDRQWIEAGTEVVKDIFSQTAGIVTVTQKNDILREIIVRSGTFKLCKESKALDRFEGDGQIVNPGETIAKGIKTDSMVMVQSVETPEGKGLLLRSVEEFTIPDQAQLPELKHVKQPKGPSLGIKASQRLAYKDGELIKSVEGVELLKTQLMLETFDTTPQMTVDVEVIHDLNSKGDRLKLVILESILVRRDTTSDSSHGSTHTELQIENAQVVSAGDVVATTQILCKQEGVVQLPDAVDGDPVRRLIVERDEDTITIDSKGTTLLKVGQRVVDGDFVSKDQSIDACGEIENIDGKKVKLRLGRPYMVSPDSVLHVRDGDLVQRGDGLALLVFERQKTGDIVQGLPRIEELLEARRPRDSAILCKKSGTVDIKKGDDDDSVVVSIIEDNDVISEYPILLGRNVMVRNSQQVIAGEFLTDGPVNPHELLECFFTDLRDKKPLMDAAQEAIAKLQHRMVSEVQNVYKSQGVAIDDKHIEVIVRQMTSKVRIEDAGDTTFLPGELIELRQVEDTNQAISITGGAPSEFTPVLLGITKASLNTDSFISAASFQETTRVLTEAAIEGKSDWLRGLKENVIIGRLIPAGTGFSGFVEELNAEAGPHPDILAEDPAGYRRIQNLRPDYTVDMPSSPVAKNTAVLDDPSDEDLEATRSRHGIDPTTSNFAAFARPTGDDELSAEDQMPDPAALEGLQEEGLLSDE.

The tract at residues 1–43 (MTSSSPKTRKSSTKSKAKRGSKSKKAAEIKAVQRLSKTPPPFR) is disordered. Basic residues predominate over residues 7-24 (KTRKSSTKSKAKRGSKSK). 4 residues coordinate Zn(2+): Cys253, Cys320, Cys327, and Cys330. The tract at residues 1294-1369 (TVDMPSSPVA…LQEEGLLSDE (76 aa)) is disordered. The span at 1342 to 1351 (DDELSAEDQM) shows a compositional bias: acidic residues. The segment covering 1357 to 1369 (LEGLQEEGLLSDE) has biased composition (low complexity).

It belongs to the RNA polymerase beta' chain family. RpoC2 subfamily. In cyanobacteria the RNAP catalytic core is composed of 2 alpha, 1 beta, 1 beta', 1 gamma and 1 omega subunit. When a sigma factor is associated with the core the holoenzyme is formed, which can initiate transcription. Zn(2+) is required as a cofactor.

It carries out the reaction RNA(n) + a ribonucleoside 5'-triphosphate = RNA(n+1) + diphosphate. Its function is as follows. DNA-dependent RNA polymerase catalyzes the transcription of DNA into RNA using the four ribonucleoside triphosphates as substrates. In Prochlorococcus marinus (strain NATL1A), this protein is DNA-directed RNA polymerase subunit beta'.